The sequence spans 205 residues: ATP synthase subunit b (205 aa).

An N-terminal signal peptide occupies residues 1–27 (MKLNKKHLVAILSVLSLSIIVVPLLTS). Residue Cys28 is the site of N-palmitoyl cysteine attachment. The S-diacylglycerol cysteine moiety is linked to residue Cys28. The chain crosses the membrane as a helical span at residues 48 to 68 (VWVFIAQVIAMCVVFSLVLWL).

The protein belongs to the ATPase B chain family. In terms of assembly, F-type ATPases have 2 components, F(1) - the catalytic core - and F(0) - the membrane proton channel. F(1) has five subunits: alpha(3), beta(3), gamma(1), delta(1), epsilon(1). F(0) has three main subunits: a(1), b(2) and c(10-14). The alpha and beta chains form an alternating ring which encloses part of the gamma chain. F(1) is attached to F(0) by a central stalk formed by the gamma and epsilon chains, while a peripheral stalk is formed by the delta and b chains.

The protein resides in the cell membrane. Its function is as follows. F(1)F(0) ATP synthase produces ATP from ADP in the presence of a proton or sodium gradient. F-type ATPases consist of two structural domains, F(1) containing the extramembraneous catalytic core and F(0) containing the membrane proton channel, linked together by a central stalk and a peripheral stalk. During catalysis, ATP synthesis in the catalytic domain of F(1) is coupled via a rotary mechanism of the central stalk subunits to proton translocation. Functionally, component of the F(0) channel, it forms part of the peripheral stalk, linking F(1) to F(0). This is ATP synthase subunit b from Ureaplasma parvum serovar 3 (strain ATCC 27815 / 27 / NCTC 11736).